The sequence spans 334 residues: Tryptophan--tRNA ligase (334 aa).

ATP contacts are provided by residues 11-13 (QPS) and 19-20 (GN). The short motif at 12–20 (PSGELTIGN) is the 'HIGH' region element. D135 lines the L-tryptophan pocket. ATP contacts are provided by residues 147–149 (GED), V186, and 195–199 (KMSKS). Residues 195-199 (KMSKS) carry the 'KMSKS' region motif.

The protein belongs to the class-I aminoacyl-tRNA synthetase family. Homodimer.

The protein localises to the cytoplasm. It catalyses the reaction tRNA(Trp) + L-tryptophan + ATP = L-tryptophyl-tRNA(Trp) + AMP + diphosphate + H(+). In terms of biological role, catalyzes the attachment of tryptophan to tRNA(Trp). This is Tryptophan--tRNA ligase from Shigella flexneri.